Here is a 505-residue protein sequence, read N- to C-terminus: ATP synthase subunit alpha (505 aa).

169-176 (GDRQTGKT) is an ATP binding site.

This sequence belongs to the ATPase alpha/beta chains family. F-type ATPases have 2 components, CF(1) - the catalytic core - and CF(0) - the membrane proton channel. CF(1) has five subunits: alpha(3), beta(3), gamma(1), delta(1), epsilon(1). CF(0) has three main subunits: a(1), b(2) and c(9-12). The alpha and beta chains form an alternating ring which encloses part of the gamma chain. CF(1) is attached to CF(0) by a central stalk formed by the gamma and epsilon chains, while a peripheral stalk is formed by the delta and b chains.

It localises to the cell membrane. The enzyme catalyses ATP + H2O + 4 H(+)(in) = ADP + phosphate + 5 H(+)(out). Its function is as follows. Produces ATP from ADP in the presence of a proton gradient across the membrane. The alpha chain is a regulatory subunit. In Alkaliphilus oremlandii (strain OhILAs) (Clostridium oremlandii (strain OhILAs)), this protein is ATP synthase subunit alpha.